The following is a 205-amino-acid chain: Thiamine-phosphate synthase (205 aa).

Residues 36-40 and Asp-68 contribute to the 4-amino-2-methyl-5-(diphosphooxymethyl)pyrimidine site; that span reads QYRRK. Mg(2+)-binding residues include Asp-69 and Asp-88. Ser-106 serves as a coordination point for 4-amino-2-methyl-5-(diphosphooxymethyl)pyrimidine. 132-134 serves as a coordination point for 2-[(2R,5Z)-2-carboxy-4-methylthiazol-5(2H)-ylidene]ethyl phosphate; the sequence is SPT. 4-amino-2-methyl-5-(diphosphooxymethyl)pyrimidine is bound at residue Lys-135. Residues Gly-162 and 182-183 each bind 2-[(2R,5Z)-2-carboxy-4-methylthiazol-5(2H)-ylidene]ethyl phosphate; that span reads IS.

This sequence belongs to the thiamine-phosphate synthase family. The cofactor is Mg(2+).

The enzyme catalyses 2-[(2R,5Z)-2-carboxy-4-methylthiazol-5(2H)-ylidene]ethyl phosphate + 4-amino-2-methyl-5-(diphosphooxymethyl)pyrimidine + 2 H(+) = thiamine phosphate + CO2 + diphosphate. The catalysed reaction is 2-(2-carboxy-4-methylthiazol-5-yl)ethyl phosphate + 4-amino-2-methyl-5-(diphosphooxymethyl)pyrimidine + 2 H(+) = thiamine phosphate + CO2 + diphosphate. It catalyses the reaction 4-methyl-5-(2-phosphooxyethyl)-thiazole + 4-amino-2-methyl-5-(diphosphooxymethyl)pyrimidine + H(+) = thiamine phosphate + diphosphate. Its pathway is cofactor biosynthesis; thiamine diphosphate biosynthesis; thiamine phosphate from 4-amino-2-methyl-5-diphosphomethylpyrimidine and 4-methyl-5-(2-phosphoethyl)-thiazole: step 1/1. Functionally, condenses 4-methyl-5-(beta-hydroxyethyl)thiazole monophosphate (THZ-P) and 2-methyl-4-amino-5-hydroxymethyl pyrimidine pyrophosphate (HMP-PP) to form thiamine monophosphate (TMP). The polypeptide is Thiamine-phosphate synthase (Caldivirga maquilingensis (strain ATCC 700844 / DSM 13496 / JCM 10307 / IC-167)).